We begin with the raw amino-acid sequence, 322 residues long: CRISPR-associated endonuclease Cas1 (322 aa).

Residues glutamate 149, histidine 214, and glutamate 229 each coordinate Mn(2+).

This sequence belongs to the CRISPR-associated endonuclease Cas1 family. Homodimer, forms a heterotetramer with a Cas2 homodimer. It depends on Mg(2+) as a cofactor. Requires Mn(2+) as cofactor.

CRISPR (clustered regularly interspaced short palindromic repeat), is an adaptive immune system that provides protection against mobile genetic elements (viruses, transposable elements and conjugative plasmids). CRISPR clusters contain spacers, sequences complementary to antecedent mobile elements, and target invading nucleic acids. CRISPR clusters are transcribed and processed into CRISPR RNA (crRNA). Acts as a dsDNA endonuclease. Involved in the integration of spacer DNA into the CRISPR cassette. This Methanocaldococcus jannaschii (strain ATCC 43067 / DSM 2661 / JAL-1 / JCM 10045 / NBRC 100440) (Methanococcus jannaschii) protein is CRISPR-associated endonuclease Cas1.